The chain runs to 765 residues: Zinc metalloproteinase nas-37 (765 aa).

The first 22 residues, 1 to 22 (MKSQACLKVCLALIGLVSIVST), serve as a signal peptide directing secretion. The propeptide occupies 23–114 (AYIANDVVSD…SESNSPRSRR (92 aa)). A Peptidase M12A domain is found at 115–308 (QAHPDPRNFW…AKMINTRYCS (194 aa)). A glycan (N-linked (GlcNAc...) asparagine) is linked at N126. 6 cysteine pairs are disulfide-bonded: C156-C307, C177-C196, C311-C331, C333-C342, C350-C374, and C400-C420. H204 contacts Zn(2+). Residue E205 is part of the active site. 2 residues coordinate Zn(2+): H208 and H214. Residues 303-343 (NTRYCSNVCQRSLPCLNEGYTDPNNCGRCRCPSGYGGTYCE) enclose the EGF-like domain. Residues 350–458 (CGGSLTASSS…RGFTLKYRAI (109 aa)) enclose the CUB domain. The tract at residues 513-573 (KYSSEELYDP…TRPTPTTTVA (61 aa)) is disordered. Composition is skewed to low complexity over residues 526 to 545 (LSPS…DASP) and 562 to 573 (ALTRPTPTTTVA). In terms of domain architecture, TSP type-1 spans 576 to 627 (TASWSAWGEWSACSQPCGGCGTKTRVRACYGGNQVCPGSNLDRESCNAHACA). 3 disulfides stabilise this stretch: C588/C621, C592/C626, and C604/C611.

Zn(2+) is required as a cofactor. Expressed in hypodermal cells. Not expressed in the seam cells in L1 to L3 larvae, but it is present in seam cells of L4 larvae. Also expressed in attachment points of the cuticle at the anterior end of larvae, in the arcade cells in the mouth, the anterior pharynx, the amphid socket cells, and in the rectal epithelial cells at the posterior end of the larvae (at protein level).

Its subcellular location is the secreted. In terms of biological role, metalloprotease. Plays an essential role in molting, a process during larval stages in which a new cuticle is formed and the old cuticle is shed. Required during ecdysis, the opening of the cuticle to allow the worm to escape. This is Zinc metalloproteinase nas-37 (nas-37) from Caenorhabditis elegans.